The following is a 496-amino-acid chain: NADP-dependent glyceraldehyde-3-phosphate dehydrogenase (496 aa).

Residues Arg-116 and 169 to 170 (NY) contribute to the substrate site. Residues Lys-192, Thr-195, and Asp-230 each contribute to the NADP(+) site. 245 to 249 (GGDTG) contributes to the NAD(+) binding site. Glu-264 serves as the catalytic Proton acceptor. 297 to 299 (RCT) contacts substrate. Cys-298 functions as the Nucleophile in the catalytic mechanism. Glu-391 is a binding site for NADP(+). Arg-451 serves as a coordination point for substrate.

It belongs to the aldehyde dehydrogenase family.

Its subcellular location is the cytoplasm. The catalysed reaction is D-glyceraldehyde 3-phosphate + NADP(+) + H2O = (2R)-3-phosphoglycerate + NADPH + 2 H(+). Important as a means of generating NADPH for biosynthetic reactions. This is NADP-dependent glyceraldehyde-3-phosphate dehydrogenase (GAPN) from Pisum sativum (Garden pea).